Consider the following 1849-residue polypeptide: SH3 and multiple ankyrin repeat domains protein 2 (1849 aa).

The disordered stretch occupies residues 1-33 (MPRSPTSSEDEMAQSFSDYSVGSESDSSKEETI). Positions 15–25 (SFSDYSVGSES) are enriched in low complexity. ANK repeat units follow at residues 196-226 (TGET…HLDF), 230-259 (DGMT…SPDY), 263-293 (YGLT…TVCC), 297-326 (NGWH…DMSA), 330-359 (SGNT…NKEL), and 363-393 (NSQT…DIVP). Residues 451-493 (QQMPSKPEGAAKTIGSYVPGPRSRSPSLNRLGGAGEDGKRPQP) are disordered. The region spanning 526–585 (VPGRLFVAVKPYQPQVDGEIPLHRGDRVKVLSIGEGGFWEGSARGHIGWFPAECVEEVQC) is the SH3 domain. Positions 626–720 (TVVLQKKDNE…HLVLKVVTVT (95 aa)) constitute a PDZ domain. A compositionally biased stretch (basic and acidic residues) spans 764-774 (SVRKKKDKPEE). The disordered stretch occupies residues 764-808 (SVRKKKDKPEEIVPASKPSRAAENMAVEPRVATIKQRPSSRCFPA). At S831 the chain carries Phosphoserine. Phosphothreonine is present on T860. Residues 878–910 (LSMPDTSEDIPPPPQSVPPSPPPPSPTTYNCPK) are disordered. Positions 887-903 (IPPPPQSVPPSPPPPSP) are enriched in pro residues. Position 960 is a phosphoserine (S960). Disordered stretches follow at residues 1013-1293 (LVKQ…RKGD), 1328-1371 (LQEE…TTVP), 1432-1526 (PALS…GGEN), and 1574-1594 (SFVI…PGMA). Low complexity predominate over residues 1040–1052 (STSSSGKSSQGSS). Over residues 1086 to 1097 (VRDREKRLEARR) the composition is skewed to basic and acidic residues. S1099 carries the phosphoserine modification. Over residues 1128 to 1138 (EEGDFADEDSA) the composition is skewed to acidic residues. 3 stretches are compositionally biased toward low complexity: residues 1159–1170 (GGAEASAPGEAG), 1181–1199 (GPES…AGPG), and 1208–1221 (RLLD…LALS). The span at 1274–1293 (RRQETENKYETDLGRDRKGD) shows a compositional bias: basic and acidic residues. T1278 carries the phosphothreonine modification. Residues 1327 to 1333 (ALQEEDE) carry the SH3-binding motif. The segment covering 1343-1357 (SSPSEVPEGVSETEG) has biased composition (low complexity). The span at 1445-1460 (TPQSPSLNSSQPTNSA) shows a compositional bias: polar residues. Residues 1494–1505 (VDSRSSSDHHLE) are compositionally biased toward basic and acidic residues. Residues 1506 to 1522 (TTSTISTVSSISTLSSE) show a composition bias toward low complexity. Positions 1577–1588 (IPPPAPPPPPGS) are enriched in pro residues. T1667 is a glycosylation site (O-linked (GlcNAc) threonine). Over residues 1678–1692 (FTVRPGTSQPITLQS) the composition is skewed to polar residues. The tract at residues 1678–1776 (FTVRPGTSQP…SILQQPISNK (99 aa)) is disordered. Phosphoserine is present on residues S1709 and S1713. Low complexity-rich tracts occupy residues 1721-1738 (TLPA…PALS) and 1760-1774 (RSRS…QPIS). The SAM domain maps to 1786–1849 (WTKPDVADWL…ERALKQLLDR (64 aa)).

It belongs to the SHANK family. Is part of a complex with DLG4/PSD-95 and DLGAP1/GKAP. Interacts with CTTN/cortactin SH3 domain, DLGAP1/GKAP and alpha-latrotoxin receptor 1. Interacts with DNM2, DBNL, GRID2, BAIAP2, SLC9A3, PLCB3 and CFTR. Interacts (via proline-rich region) with PDE4D. Interacts with ABI1 (via SH3 domain). In terms of tissue distribution, isoform 3 is present in epithelial colonic cells (at protein level).

The protein resides in the apical cell membrane. Its subcellular location is the cytoplasm. The protein localises to the synapse. It localises to the postsynaptic density. It is found in the cell projection. The protein resides in the growth cone. Its subcellular location is the dendritic spine. In terms of biological role, seems to be an adapter protein in the postsynaptic density (PSD) of excitatory synapses that interconnects receptors of the postsynaptic membrane including NMDA-type and metabotropic glutamate receptors, and the actin-based cytoskeleton. May play a role in the structural and functional organization of the dendritic spine and synaptic junction. This Homo sapiens (Human) protein is SH3 and multiple ankyrin repeat domains protein 2 (SHANK2).